Here is a 247-residue protein sequence, read N- to C-terminus: 2,3-bisphosphoglycerate-dependent phosphoglycerate mutase (247 aa).

Substrate contacts are provided by residues 8 to 15, 21 to 22, R60, 87 to 90, K98, 114 to 115, and 183 to 184; these read RHGESTWN, TG, ERHY, RR, and GN. H9 acts as the Tele-phosphohistidine intermediate in catalysis. E87 serves as the catalytic Proton donor/acceptor.

Belongs to the phosphoglycerate mutase family. BPG-dependent PGAM subfamily. Homodimer.

It catalyses the reaction (2R)-2-phosphoglycerate = (2R)-3-phosphoglycerate. It functions in the pathway carbohydrate degradation; glycolysis; pyruvate from D-glyceraldehyde 3-phosphate: step 3/5. Functionally, catalyzes the interconversion of 2-phosphoglycerate and 3-phosphoglycerate. This is 2,3-bisphosphoglycerate-dependent phosphoglycerate mutase from Acidovorax sp. (strain JS42).